A 315-amino-acid polypeptide reads, in one-letter code: Small ribosomal subunit biogenesis GTPase RsgA (315 aa).

Residues 80–241 form the CP-type G domain; that stretch reads LSKQTHIIAS…IIDTPGIKGF (162 aa). Residues 129 to 132 and 183 to 191 each bind GTP; these read NKVD and GHSGTGKST. Zn(2+) contacts are provided by cysteine 265, cysteine 270, histidine 272, and cysteine 278.

It belongs to the TRAFAC class YlqF/YawG GTPase family. RsgA subfamily. Monomer. Associates with 30S ribosomal subunit, binds 16S rRNA. Zn(2+) is required as a cofactor.

It is found in the cytoplasm. Its function is as follows. One of several proteins that assist in the late maturation steps of the functional core of the 30S ribosomal subunit. Helps release RbfA from mature subunits. May play a role in the assembly of ribosomal proteins into the subunit. Circularly permuted GTPase that catalyzes slow GTP hydrolysis, GTPase activity is stimulated by the 30S ribosomal subunit. This Christiangramia forsetii (strain DSM 17595 / CGMCC 1.15422 / KT0803) (Gramella forsetii) protein is Small ribosomal subunit biogenesis GTPase RsgA.